A 349-amino-acid chain; its full sequence is tRNA pseudouridine synthase D (349 aa).

Substrate is bound at residue Phe27. Asp80 acts as the Nucleophile in catalysis. A substrate-binding site is contributed by Asn129. The TRUD domain occupies 155–303; sequence GVPNYFGAQR…VEAARRAMLL (149 aa). Phe329 serves as a coordination point for substrate.

Belongs to the pseudouridine synthase TruD family.

The catalysed reaction is uridine(13) in tRNA = pseudouridine(13) in tRNA. Functionally, responsible for synthesis of pseudouridine from uracil-13 in transfer RNAs. The polypeptide is tRNA pseudouridine synthase D (Shigella dysenteriae serotype 1 (strain Sd197)).